The primary structure comprises 390 residues: MANITTKETPPTTPDLLKSPYQKIINASVSVFDETHGRSFFSPQFYEKIEPYLKEVLTHPIGLECDLNTAKKTNRLTPLKQLFKVCFDTEEVLIVNNNTSTVFLIANALAQQKEIIVSYGELVGGDFNLKDILLSSGARLHLVGNTNRAYLRDYRLALNENSKMLFKTHNPTFKKDTSFKDLQALAKEHGLIDYYNLGDVDLLNRTALEEILALKPSLVSFSADKSFNSAQAGIIMGQKEWVETLKNHPLYRALRVGKITLTLLFHSLNAWVNHQEEITIHALLHQTKDALLQKALKLYALLKPLELNVSIASSFSKIGNLPDKELESFCVKVQPKNTRALNCEKLYLKLFQKGVITRISCAFVCFEVFSLNGEDLEKIALVLKEILNKA.

The residue at position 225 (Lys225) is an N6-(pyridoxal phosphate)lysine.

Belongs to the SelA family. Pyridoxal 5'-phosphate serves as cofactor.

It is found in the cytoplasm. It carries out the reaction L-seryl-tRNA(Sec) + selenophosphate + H(+) = L-selenocysteinyl-tRNA(Sec) + phosphate. It functions in the pathway aminoacyl-tRNA biosynthesis; selenocysteinyl-tRNA(Sec) biosynthesis; selenocysteinyl-tRNA(Sec) from L-seryl-tRNA(Sec) (bacterial route): step 1/1. Its function is as follows. Converts seryl-tRNA(Sec) to selenocysteinyl-tRNA(Sec) required for selenoprotein biosynthesis. This chain is L-seryl-tRNA(Sec) selenium transferase, found in Helicobacter pylori (strain J99 / ATCC 700824) (Campylobacter pylori J99).